The chain runs to 305 residues: GMP synthase [glutamine-hydrolyzing] subunit B (305 aa).

The 183-residue stretch at 2 to 184 (VDANAFIDEA…LPLPEEISER (183 aa)) folds into the GMPS ATP-PPase domain. An ATP-binding site is contributed by 29–35 (SGGVDSS).

In terms of assembly, heterodimer composed of a glutamine amidotransferase subunit (A) and a GMP-binding subunit (B).

It catalyses the reaction XMP + L-glutamine + ATP + H2O = GMP + L-glutamate + AMP + diphosphate + 2 H(+). The protein operates within purine metabolism; GMP biosynthesis; GMP from XMP (L-Gln route): step 1/1. Functionally, catalyzes the synthesis of GMP from XMP. This chain is GMP synthase [glutamine-hydrolyzing] subunit B, found in Methanocella arvoryzae (strain DSM 22066 / NBRC 105507 / MRE50).